The chain runs to 315 residues: Aspartate carbamoyltransferase catalytic subunit (315 aa).

Carbamoyl phosphate contacts are provided by R55 and T56. K83 serves as a coordination point for L-aspartate. The carbamoyl phosphate site is built by R105, H138, and Q141. Positions 171 and 225 each coordinate L-aspartate. 2 residues coordinate carbamoyl phosphate: G266 and P267.

This sequence belongs to the aspartate/ornithine carbamoyltransferase superfamily. ATCase family. Heterododecamer (2C3:3R2) of six catalytic PyrB chains organized as two trimers (C3), and six regulatory PyrI chains organized as three dimers (R2).

It catalyses the reaction carbamoyl phosphate + L-aspartate = N-carbamoyl-L-aspartate + phosphate + H(+). The protein operates within pyrimidine metabolism; UMP biosynthesis via de novo pathway; (S)-dihydroorotate from bicarbonate: step 2/3. Its function is as follows. Catalyzes the condensation of carbamoyl phosphate and aspartate to form carbamoyl aspartate and inorganic phosphate, the committed step in the de novo pyrimidine nucleotide biosynthesis pathway. The sequence is that of Aspartate carbamoyltransferase catalytic subunit from Mycolicibacterium vanbaalenii (strain DSM 7251 / JCM 13017 / BCRC 16820 / KCTC 9966 / NRRL B-24157 / PYR-1) (Mycobacterium vanbaalenii).